The sequence spans 2548 residues: Variant-silencing SET domain-containing protein (2548 aa).

Residues 37–48 (IDDDDDDDNDNN) are compositionally biased toward acidic residues. Disordered regions lie at residues 37–61 (IDDDDDDDNDNNEEPKEMNINKTNN), 336–379 (GDPK…DDDN), and 585–629 (SVDR…NTQT). Over residues 336-357 (GDPKKRIERNKQEIEDHRREQD) the composition is skewed to basic and acidic residues. The segment covering 358–378 (GENDQEEDNYDDYDDEDDDDD) has biased composition (acidic residues). The span at 602–616 (NGSNNNNSSSNNNNN) shows a compositional bias: low complexity. A compositionally biased stretch (polar residues) spans 617-629 (ITHITNDCDNTQT). The PHD-type 1 zinc-finger motif lies at 787–846 (FYLCEFCEQNIFDMNNMIKKDKAKECMYRCNISCGRTFHKACVCYIKNNDNYICFFCLYD). The span at 929 to 944 (IKRRHIYRKRRRRGPR) shows a compositional bias: basic residues. Disordered stretches follow at residues 929-1054 (IKRR…CDEN), 1546-1575 (EKNTKNKLCNNDNNNNNNNKGKNTKYNTLD), 1713-1732 (EQGSINNAKHNEQGSINNAK), and 1772-1822 (INNA…DDHR). The span at 986-1016 (DNNDDNNDNNDDNNDNNDDNNDNNDNNDDNN) shows a compositional bias: acidic residues. Composition is skewed to low complexity over residues 1017–1050 (NDNNNNNNNDNNDNNNNNNNNNNNNDNDNNNNNN) and 1551–1572 (NKLCNNDNNNNNNNKGKNTKYN). Over residues 1714–1732 (QGSINNAKHNEQGSINNAK) the composition is skewed to polar residues. An AWS domain is found at 2067-2117 (SDDYKCLCQGECNLYTCYNSLSNIQCSKSRCNLPEKIQDRKCFNRPFRKSF). Residues 2119 to 2240 (KDLEIKKTEK…SGEEITYNYS (122 aa)) form the SET domain. Y2239 provides a ligand contact to S-adenosyl-L-methionine. The PHD-type 2 zinc-finger motif lies at 2423 to 2471 (DEVCRKCKSCGNLTMCDKCFQSYHQLCGNMHSKMYKNNELVLCRFCQKY).

This sequence belongs to the class V-like SAM-binding methyltransferase superfamily.

Its subcellular location is the nucleus. The protein resides in the chromosome. The enzyme catalyses L-lysyl(36)-[histone H3] + 3 S-adenosyl-L-methionine = N(6),N(6),N(6)-trimethyl-L-lysyl(36)-[histone H3] + 3 S-adenosyl-L-homocysteine + 3 H(+). In terms of biological role, histone methyltransferase that specifically represses expression of the surface antigen-coding var genes by mediating trimethylation of 'Lys-36' of histone H3 (H3K36me3) on var genes. SETVS-dependent H3K36me3 is specifically involved in var genes silencing, a central step malaria pathogenesis: each parasite contains 60 distinct var genes that each code for a different PfEMP1 protein. During infection, the clonal parasite population expresses only 1 gene at a time, while the 59 other var genes are silenced. The parasite then switches to the expression of a new variant antigen as an immune-evasion mechanism to avoid the host antibody response. Represses expression of both var mRNA and antisense long non-coding RNA. The chain is Variant-silencing SET domain-containing protein (SETVS) from Plasmodium falciparum (isolate 3D7).